The chain runs to 562 residues: Formate--tetrahydrofolate ligase (562 aa).

71–78 (TPAGEGKS) provides a ligand contact to ATP.

The protein belongs to the formate--tetrahydrofolate ligase family.

It catalyses the reaction (6S)-5,6,7,8-tetrahydrofolate + formate + ATP = (6R)-10-formyltetrahydrofolate + ADP + phosphate. It participates in one-carbon metabolism; tetrahydrofolate interconversion. The sequence is that of Formate--tetrahydrofolate ligase from Bacillus cereus (strain ATCC 14579 / DSM 31 / CCUG 7414 / JCM 2152 / NBRC 15305 / NCIMB 9373 / NCTC 2599 / NRRL B-3711).